Here is a 247-residue protein sequence, read N- to C-terminus: Cell division protein ZapD (247 aa).

This sequence belongs to the ZapD family. As to quaternary structure, interacts with FtsZ.

The protein resides in the cytoplasm. Its function is as follows. Cell division factor that enhances FtsZ-ring assembly. Directly interacts with FtsZ and promotes bundling of FtsZ protofilaments, with a reduction in FtsZ GTPase activity. This is Cell division protein ZapD from Escherichia coli O7:K1 (strain IAI39 / ExPEC).